The sequence spans 820 residues: Leucine--tRNA ligase (820 aa).

Positions 40 to 51 match the 'HIGH' region motif; sequence PYPSGAGLHVGH. A 'KMSKS' region motif is present at residues 601–605; it reads KMSKS. Lys604 contacts ATP.

Belongs to the class-I aminoacyl-tRNA synthetase family.

Its subcellular location is the cytoplasm. The enzyme catalyses tRNA(Leu) + L-leucine + ATP = L-leucyl-tRNA(Leu) + AMP + diphosphate. In Chlamydia caviae (strain ATCC VR-813 / DSM 19441 / 03DC25 / GPIC) (Chlamydophila caviae), this protein is Leucine--tRNA ligase.